The sequence spans 359 residues: Carbamoyl phosphate synthase small chain (359 aa).

The interval 1-169 (MTKRILVLED…TKTSYPAPGV (169 aa)) is CPSase. 3 residues coordinate L-glutamine: serine 46, glycine 220, and glycine 222. The 187-residue stretch at 172–358 (SVVLVDFGLK…IEMMEVFKQS (187 aa)) folds into the Glutamine amidotransferase type-1 domain. Catalysis depends on cysteine 247, which acts as the Nucleophile. L-glutamine contacts are provided by methionine 248, glutamine 251, asparagine 289, glycine 291, and tyrosine 292. Active-site residues include histidine 331 and aspartate 333.

Belongs to the CarA family. Composed of two chains; the small (or glutamine) chain promotes the hydrolysis of glutamine to ammonia, which is used by the large (or ammonia) chain to synthesize carbamoyl phosphate. Tetramer of heterodimers (alpha,beta)4.

The catalysed reaction is hydrogencarbonate + L-glutamine + 2 ATP + H2O = carbamoyl phosphate + L-glutamate + 2 ADP + phosphate + 2 H(+). The enzyme catalyses L-glutamine + H2O = L-glutamate + NH4(+). Its pathway is amino-acid biosynthesis; L-arginine biosynthesis; carbamoyl phosphate from bicarbonate: step 1/1. The protein operates within pyrimidine metabolism; UMP biosynthesis via de novo pathway; (S)-dihydroorotate from bicarbonate: step 1/3. Functionally, small subunit of the glutamine-dependent carbamoyl phosphate synthetase (CPSase). CPSase catalyzes the formation of carbamoyl phosphate from the ammonia moiety of glutamine, carbonate, and phosphate donated by ATP, constituting the first step of 2 biosynthetic pathways, one leading to arginine and/or urea and the other to pyrimidine nucleotides. The small subunit (glutamine amidotransferase) binds and cleaves glutamine to supply the large subunit with the substrate ammonia. The chain is Carbamoyl phosphate synthase small chain from Streptococcus pneumoniae (strain ATCC BAA-255 / R6).